The primary structure comprises 227 residues: Chalcone--flavanone isomerase (227 aa).

Substrate is bound by residues threonine 50, asparagine 115, and serine 192.

The protein belongs to the chalcone isomerase family. As to expression, fibers.

It carries out the reaction a chalcone = a flavanone.. The protein operates within secondary metabolite biosynthesis; flavonoid biosynthesis. Functionally, catalyzes the intramolecular cyclization of bicyclic chalcones into tricyclic (S)-flavanones. Responsible for the isomerization of 4,2',4',6'-tetrahydroxychalcone (also termed chalcone) into naringenin. This chain is Chalcone--flavanone isomerase (CHI), found in Gossypium hirsutum (Upland cotton).